The primary structure comprises 91 residues: MVTVLLIFLCLPVIFSSSTFAAVSDLDPECLAPFAVYLIFTFVTATCVCSIITLLITSLQFFDYYYVRIVYRRHHPRYQNPQIAALLQLQP.

Residues 1–21 (MVTVLLIFLCLPVIFSSSTFA) form the signal peptide. The Lumenal segment spans residues 22-33 (AVSDLDPECLAP). Residues 34 to 56 (FAVYLIFTFVTATCVCSIITLLI) traverse the membrane as a helical segment. The Cytoplasmic portion of the chain corresponds to 57–91 (TSLQFFDYYYVRIVYRRHHPRYQNPQIAALLQLQP).

The protein belongs to the adenoviridae E3B family.

It localises to the host endoplasmic reticulum membrane. In terms of biological role, down-regulates the EGF receptor. The protein is Early E3B 10.4 kDa protein of Homo sapiens (Human).